The following is a 177-amino-acid chain: ATP synthase subunit delta (177 aa).

Belongs to the ATPase delta chain family. As to quaternary structure, F-type ATPases have 2 components, F(1) - the catalytic core - and F(0) - the membrane proton channel. F(1) has five subunits: alpha(3), beta(3), gamma(1), delta(1), epsilon(1). F(0) has three main subunits: a(1), b(2) and c(10-14). The alpha and beta chains form an alternating ring which encloses part of the gamma chain. F(1) is attached to F(0) by a central stalk formed by the gamma and epsilon chains, while a peripheral stalk is formed by the delta and b chains.

It is found in the cell inner membrane. Its function is as follows. F(1)F(0) ATP synthase produces ATP from ADP in the presence of a proton or sodium gradient. F-type ATPases consist of two structural domains, F(1) containing the extramembraneous catalytic core and F(0) containing the membrane proton channel, linked together by a central stalk and a peripheral stalk. During catalysis, ATP synthesis in the catalytic domain of F(1) is coupled via a rotary mechanism of the central stalk subunits to proton translocation. This protein is part of the stalk that links CF(0) to CF(1). It either transmits conformational changes from CF(0) to CF(1) or is implicated in proton conduction. The polypeptide is ATP synthase subunit delta (Shewanella baltica (strain OS223)).